Here is a 791-residue protein sequence, read N- to C-terminus: Cellobionic acid phosphorylase (791 aa).

The Proton donor role is filled by aspartate 478.

It belongs to the glycosyl hydrolase 94 family. Cellobionic acid phosphorylase subfamily. In terms of assembly, homodimer.

It catalyses the reaction 4-O-beta-D-glucopyranosyl-D-gluconate + phosphate = D-gluconate + alpha-D-glucose 1-phosphate. Its pathway is glycan metabolism; cellulose degradation. Catalyzes the reversible phosphorolysis of cellobionic acid (4-O-beta-D-glucopyranosyl-D-gluconate), a probable step in cellulose degradation. May be part of a metabolic pathway where cellobionic acid is converted into alpha-D-glucose 1-phosphate and D-gluconic acid to enter glycolysis and the pentose phosphate pathway, respectively. Produces 4-O-beta-D-glucopyranosyl-D-glucuronate from alpha-D-glucose 1-phosphate and D-glucuronate with low activity in the synthetic direction. The sequence is that of Cellobionic acid phosphorylase from Neurospora crassa (strain ATCC 24698 / 74-OR23-1A / CBS 708.71 / DSM 1257 / FGSC 987).